We begin with the raw amino-acid sequence, 413 residues long: MTYPEEIDEYSLIQNGLKSLNEAAQRCQQTKHSSQDSSIEGCSARQSARDELVLEALKFLQIAQGPIDAAATCYERTAHLASVRALLEMGVFEALPTGRVSRRTEELARELNVDESLLARLLRNSSLYGPFEETGPGQYRHTPFSEAYLRPEIRGMFRFAMDDHMPAHLKLHEFLQRNGWQEPSSTTDNPYTYAHKTNGKSMFDNLSEKPERMKAFNNGMTVQAMTPLWMIDLFPWRSLAQLKPTAGQVLAVDIGGGKGKAISRIRSFCNGLPGRYILQDQEHVVKSVEGSLDPSIERMAYNFFTEQPIRGAVTYLIRRCLHNWPQDSVVCILQNIAAAMEPGKSRLLIEEIVVPAEKAGVEEGWMDMIMMSLGAKQRTLKEWEMVLGLAGLEVKKVYQIPGNCHGLIEAWLK.

S-adenosyl-L-methionine contacts are provided by residues 255-256 (GG), aspartate 280, 302-303 (NF), and arginine 319. Residue histidine 322 is the Proton acceptor of the active site.

The protein belongs to the class I-like SAM-binding methyltransferase superfamily. Cation-independent O-methyltransferase family. It depends on S-adenosyl-L-methionine as a cofactor.

It functions in the pathway secondary metabolite biosynthesis. Non-reducing polyketide synthase; part of the gene cluster that mediates the biosynthesis of the bicoumarin kotanin. The non-reducing polyketide synthase ktnS first catalyzes the formation of the pentaketidic 4,7-dihydroxy-5-methylcoumarin from acetyl coenzyme A and 4 malonyl coenzyme A molecules. Further O-methylation by ktnB leads to the formation of 7-demethylsiderin. Then, an oxidative phenol coupling catalyzed by the cytochrome P450 monooxygenase ktnC forms the 8,8'-dimer P-orlandin via dimerization the monomeric precursor, 7-demethylsiderin. P-orlandin is subsequently O-methylated in a stepwise fashion to demethylkotanin and kotanin. The sequence is that of O-methyltransferase kntB from Aspergillus niger (strain ATCC MYA-4892 / CBS 513.88 / FGSC A1513).